The sequence spans 725 residues: Dynein axonemal assembly factor 1 (725 aa).

The disordered stretch occupies residues 1–91; sequence MHPEPSEPAT…EDRGPRMTKS (91 aa). Over residues 38–48 the composition is skewed to basic and acidic residues; it reads GCKEEINDPKE. Residues 53-67 are compositionally biased toward polar residues; the sequence is SSDTSYHSQQKQSGD. The segment covering 76-86 has biased composition (basic and acidic residues); sequence HPREDREDRGP. 6 LRR repeats span residues 107–129, 130–151, 152–173, 174–195, 196–217, and 221–242; these read ALND…EEYT, GLRC…EAQT, ELRC…EPLQ, KLDA…SCLP, VLNT…QHLQ, and RLCV…SILE. The LRRCT domain maps to 256–294; it reads PVIRQIPNYRRTVTVRLKHLTYLDDRPVFPKDRACAEAW. Positions 330–345 are enriched in basic and acidic residues; it reads RAEERKRQRESQERGE. The interval 330–513 is disordered; that stretch reads RAEERKRQRE…LGAAREEPTP (184 aa). The residue at position 358 (S358) is a Phosphoserine. Basic and acidic residues-rich tracts occupy residues 360 to 408 and 481 to 491; these read EGKE…REDG and VKGEDGDREPE. Phosphothreonine is present on T559. Residues S562 and S583 each carry the phosphoserine modification. Over residues 632–642 the composition is skewed to basic and acidic residues; sequence DLEIRKQDTKS. A disordered region spans residues 632–703; that stretch reads DLEIRKQDTK…AATPPETCVG (72 aa).

It belongs to the DNAAF1 family. In terms of tissue distribution, mainly expressed in trachea and testis.

Its subcellular location is the cell projection. It localises to the cilium. It is found in the cytoplasm. The protein localises to the cytoskeleton. The protein resides in the spindle pole. Its function is as follows. Cilium-specific protein required for the stability of the ciliary architecture. Plays a role in cytoplasmic preassembly of dynein arms. Involved in regulation of microtubule-based cilia and actin-based brush border microvilli. The polypeptide is Dynein axonemal assembly factor 1 (DNAAF1) (Homo sapiens (Human)).